Here is a 422-residue protein sequence, read N- to C-terminus: Adenylosuccinate synthetase (422 aa).

GTP contacts are provided by residues 11–17 and 39–41; these read GDEGKGK and GHT. Aspartate 12 (proton acceptor) is an active-site residue. Residues aspartate 12 and glycine 39 each coordinate Mg(2+). IMP is bound by residues 12 to 15, 37 to 40, threonine 129, arginine 143, asparagine 219, threonine 234, and arginine 298; these read DEGK and NAGH. Histidine 40 functions as the Proton donor in the catalytic mechanism. 294–300 contacts substrate; sequence VTTGRRR. GTP is bound by residues arginine 300, 326–328, and 409–411; these read KLD and GTG.

It belongs to the adenylosuccinate synthetase family. Homodimer. Mg(2+) serves as cofactor.

It localises to the cytoplasm. It catalyses the reaction IMP + L-aspartate + GTP = N(6)-(1,2-dicarboxyethyl)-AMP + GDP + phosphate + 2 H(+). The protein operates within purine metabolism; AMP biosynthesis via de novo pathway; AMP from IMP: step 1/2. Functionally, plays an important role in the de novo pathway and in the salvage pathway of purine nucleotide biosynthesis. Catalyzes the first committed step in the biosynthesis of AMP from IMP. The protein is Adenylosuccinate synthetase of Blastomyces gilchristii (strain SLH14081) (Blastomyces dermatitidis).